The chain runs to 302 residues: Homoserine kinase (302 aa).

An ATP-binding site is contributed by 92–102 (PLARGLGSSAT).

This sequence belongs to the GHMP kinase family. Homoserine kinase subfamily.

It localises to the cytoplasm. It catalyses the reaction L-homoserine + ATP = O-phospho-L-homoserine + ADP + H(+). The protein operates within amino-acid biosynthesis; L-threonine biosynthesis; L-threonine from L-aspartate: step 4/5. Catalyzes the ATP-dependent phosphorylation of L-homoserine to L-homoserine phosphate. The polypeptide is Homoserine kinase (Trichormus variabilis (strain ATCC 29413 / PCC 7937) (Anabaena variabilis)).